Consider the following 1484-residue polypeptide: Cystic fibrosis transmembrane conductance regulator (1484 aa).

The Cytoplasmic portion of the chain corresponds to 1–77; it reads MQRSPLEKAS…KLINALRRCF (77 aa). The helical transmembrane segment at 78 to 98 threads the bilayer; it reads FWRFMFYGIILYLGEVTKSVQ. Residues 81-365 enclose the ABC transmembrane type-1 1 domain; the sequence is FMFYGIILYL…WAVQTWYDSL (285 aa). Over 99–122 the chain is Extracellular; the sequence is PLLLGRIIASYDPDNKEERSIAIY. A helical transmembrane segment spans residues 123-146; it reads LGIGLCLLFVMRTLLLHPAIFGLH. The Cytoplasmic portion of the chain corresponds to 147-195; that stretch reads RIGMQMRIAMFSLIYKKTLKLSSRVLDKISIGQLVSLLSNNLNKFDEGL. The helical transmembrane segment at 196–216 threads the bilayer; the sequence is ALAHFVWIAPLQVTLLMGLLW. Residues 217-222 are Extracellular-facing; it reads DLLQAS. Residues 223-243 form a helical membrane-spanning segment; the sequence is AFCGLAFLIVLALFQAGLGRM. The Cytoplasmic segment spans residues 244 to 298; the sequence is MMKYRDQRAGKINERLVITSEMIENIQSVKAYCWEEAMEKMIESIRQTELKLTRK. Residues 299–319 traverse the membrane as a helical segment; it reads AAYVRYFNSSAFFFSGFFVVF. The Extracellular portion of the chain corresponds to 320–339; it reads LSVLPYALIKTIVLRKIFTT. The chain crosses the membrane as a helical span at residues 340-358; that stretch reads ISFCIVLRMAVTRQFPWAV. Residues 359-860 lie on the Cytoplasmic side of the membrane; that stretch reads QTWYDSLGAI…YLRYVTIHKS (502 aa). Residues tryptophan 401, serine 434, 458-465, and glutamine 493 contribute to the ATP site; that span reads GSTGAGKT. The region spanning 423 to 646 is the ABC transporter 1 domain; it reads NADNSLFFSN…RPDFSSKLMG (224 aa). Cysteine 524 is lipidated: S-palmitoyl cysteine. A phosphoserine mark is found at serine 549 and serine 660. Residues 654 to 833 are disordered R region; the sequence is SAERRNSIIT…EEINEEDLKE (180 aa). At serine 670 the chain carries Phosphoserine; by PKA. Serine 686 is modified (phosphoserine). Lysine 688 is covalently cross-linked (Glycyl lysine isopeptide (Lys-Gly) (interchain with G-Cter in ubiquitin)). 2 positions are modified to phosphoserine: serine 700 and serine 712. The residue at position 717 (threonine 717) is a Phosphothreonine. Phosphoserine occurs at positions 737, 769, 792, 797, and 815. Residues 861–881 form a helical membrane-spanning segment; the sequence is LVFVLIWCLVIFLAEVAISLV. Residues 861–1157 form the ABC transmembrane type-1 2 domain; the sequence is LVFVLIWCLV…AVNSSIDVDS (297 aa). Topologically, residues 882–920 are extracellular; it reads VLWLLKKTASQDKGNSTQSINSSYTVIFTSTSTYYVFYI. 2 N-linked (GlcNAc...) asparagine glycosylation sites follow: asparagine 896 and asparagine 902. The chain crosses the membrane as a discontinuously helical span at residues 921–941; the sequence is YVGVADTLLALGFFRGLPLVH. At 942–992 the chain is on the cytoplasmic side; sequence TLITVSKILHHKMLHAVLQAPMSTLNALKAGGILNRFSKDIAILDDLLPLT. A helical transmembrane segment spans residues 993–1013; that stretch reads IFDFVQLLLIVIGAVTVVSAL. Topologically, residues 1014 to 1015 are extracellular; sequence QP. A helical membrane pass occupies residues 1016–1036; it reads YIFLATVPVIAAFIMLRAYFL. Residues 1037–1097 are Cytoplasmic-facing; sequence HTSQQLKQLE…TANWFLYLST (61 aa). A helical transmembrane segment spans residues 1098–1118; it reads LRWFQMRMEIIFVIFFIAITF. The Extracellular segment spans residues 1119-1132; the sequence is ISILTTGEGVGAVG. A helical membrane pass occupies residues 1133–1153; it reads IILTLAMNIMGTLQWAVNSSI. The Cytoplasmic portion of the chain corresponds to 1154-1484; the sequence is DVDSLMRSVS…TEEEVQETRL (331 aa). An ABC transporter 2 domain is found at 1214–1447; it reads MTVKDLTAKY…KSLFRQAISP (234 aa). ATP is bound by residues tyrosine 1223 and 1248–1255; that span reads GRTGSGKS. The tract at residues 1390-1484 is interaction with GORASP2; the sequence is RTLKQAFADC…TEEEVQETRL (95 aa). The S-palmitoyl cysteine moiety is linked to residue cysteine 1399. A phosphoserine mark is found at serine 1448 and serine 1460. Basic residues predominate over residues 1456 to 1465; it reads HRNSSKHKSR. The segment at 1456–1484 is disordered; that stretch reads HRNSSKHKSRSQIAALKEETEEEVQETRL. The span at 1474 to 1484 shows a compositional bias: acidic residues; that stretch reads ETEEEVQETRL. The short motif at 1482 to 1484 is the PDZ-binding element; sequence TRL.

The protein belongs to the ABC transporter superfamily. ABCC family. CFTR transporter (TC 3.A.1.202) subfamily. Monomer; does not require oligomerization for channel activity. May form oligomers in the membrane. Interacts with SLC26A3, SLC26A6 and NHERF1. Interacts with SHANK2. Interacts with MYO6. Interacts (via C-terminus) with GOPC (via PDZ domain); this promotes CFTR internalization and thereby decreases channel activity. Interacts with SLC4A7 through NHERF1. Found in a complex with MYO5B and RAB11A. Interacts with ANO1. Interacts with SLC26A8. Interacts with AHCYL1; the interaction increases CFTR activity. Interacts with CSE1L. The core-glycosylated form interacts with GORASP2 (via PDZ GRASP-type 1 domain) in respone to ER stress. Interacts with MARCHF2; the interaction leads to CFTR ubiqtuitination and degradation. Interacts with ADGRG2. N-glycosylated. In terms of processing, phosphorylated; cAMP treatment promotes phosphorylation and activates the channel. Dephosphorylation decreases the ATPase activity (in vitro). Phosphorylation at PKA sites activates the channel. Phosphorylation at PKC sites enhances the response to phosphorylation by PKA. Phosphorylated by AMPK; this inhibits channel activity. Post-translationally, ubiquitinated, leading to its degradation in the lysosome. Deubiquitination by USP10 in early endosomes enhances its endocytic recycling to the cell membrane. Ubiquitinated by RNF185 during ER stress. Ubiquitinated by MARCHF2.

It localises to the apical cell membrane. Its subcellular location is the early endosome membrane. The protein localises to the cell membrane. The protein resides in the recycling endosome membrane. It is found in the endoplasmic reticulum membrane. It localises to the nucleus. It catalyses the reaction ATP + H2O + closed Cl(-) channel = ADP + phosphate + open Cl(-) channel.. The catalysed reaction is chloride(in) = chloride(out). The enzyme catalyses hydrogencarbonate(in) = hydrogencarbonate(out). It carries out the reaction ATP + H2O = ADP + phosphate + H(+). Functionally, epithelial ion channel that plays an important role in the regulation of epithelial ion and water transport and fluid homeostasis. Mediates the transport of chloride ions across the cell membrane. Possesses an intrinsic ATPase activity and utilizes ATP to gate its channel; the passive flow of anions through the channel is gated by cycles of ATP binding and hydrolysis by the ATP-binding domains. The ion channel is also permeable to HCO(3)(-); selectivity depends on the extracellular chloride concentration. Exerts its function also by modulating the activity of other ion channels and transporters. Contributes to the regulation of the pH and the ion content of the epithelial fluid layer. Modulates the activity of the epithelial sodium channel (ENaC) complex, in part by regulating the cell surface expression of the ENaC complex. May regulate bicarbonate secretion and salvage in epithelial cells by regulating the transporter SLC4A7. Can inhibit the chloride channel activity of ANO1. Plays a role in the chloride and bicarbonate homeostasis during sperm epididymal maturation and capacitation. This Mustela putorius furo (European domestic ferret) protein is Cystic fibrosis transmembrane conductance regulator.